Consider the following 496-residue polypeptide: Glycerol kinase (496 aa).

Position 12 (threonine 12) interacts with ADP. ATP contacts are provided by threonine 12, threonine 13, and serine 14. Residue threonine 12 coordinates sn-glycerol 3-phosphate. Arginine 16 is an ADP binding site. Residues arginine 82, glutamate 83, and tyrosine 134 each coordinate sn-glycerol 3-phosphate. 3 residues coordinate glycerol: arginine 82, glutamate 83, and tyrosine 134. Phosphohistidine; by HPr is present on histidine 230. Sn-glycerol 3-phosphate is bound at residue aspartate 244. 2 residues coordinate glycerol: aspartate 244 and glutamine 245. ADP contacts are provided by threonine 266 and glycine 309. Positions 266, 309, 313, and 410 each coordinate ATP. ADP contacts are provided by glycine 410 and asparagine 414.

The protein belongs to the FGGY kinase family. In terms of assembly, homotetramer and homodimer (in equilibrium). Post-translationally, the phosphoenolpyruvate-dependent sugar phosphotransferase system (PTS), including enzyme I, and histidine-containing protein (HPr) are required for the phosphorylation, which leads to the activation of the enzyme.

The enzyme catalyses glycerol + ATP = sn-glycerol 3-phosphate + ADP + H(+). The protein operates within polyol metabolism; glycerol degradation via glycerol kinase pathway; sn-glycerol 3-phosphate from glycerol: step 1/1. Activated by phosphorylation and inhibited by fructose 1,6-bisphosphate (FBP). Functionally, key enzyme in the regulation of glycerol uptake and metabolism. Catalyzes the phosphorylation of glycerol to yield sn-glycerol 3-phosphate. This is Glycerol kinase from Bacillus mycoides (strain KBAB4) (Bacillus weihenstephanensis).